Consider the following 915-residue polypeptide: Transferrin-binding protein A (915 aa).

An N-terminal signal peptide occupies residues 1 to 24 (MQQQHLFRLNILCLSLMTALPAYA). Residues 38–45 (DTIQVKAK) carry the TonB box motif. A TBDR plug domain is found at 51–176 (RDNEVTGLGK…LAGSVAFQTK (126 aa)). The TBDR beta-barrel domain maps to 187 to 915 (QWGIQSKTAY…NYTFSLEMKF (729 aa)). The span at 526-540 (LKTPPQNNGKKTSPN) shows a compositional bias: polar residues. The tract at residues 526 to 545 (LKTPPQNNGKKTSPNGREKN) is disordered. Positions 898-915 (NRYAAPGRNYTFSLEMKF) match the TonB C-terminal box motif.

It belongs to the TonB-dependent receptor family. In terms of assembly, binds both human apo- and holo-transferrin (TF), via the TF C-terminus. Forms a large complex with TF and TbpB.

The protein localises to the cell outer membrane. In terms of biological role, neisseria acquires iron by extracting it from serum transferrin (TF) in its human host. Acts as a TF receptor and is required for TF utilization. Binds both apo- and holo-TF, via the TF C-terminus. This chain is Transferrin-binding protein A, found in Neisseria gonorrhoeae.